Here is a 21-residue protein sequence, read N- to C-terminus: Large ribosomal subunit protein uL29 (21 aa).

Belongs to the universal ribosomal protein uL29 family.

The polypeptide is Large ribosomal subunit protein uL29 (rpmC) (Brevundimonas diminuta (Pseudomonas diminuta)).